The chain runs to 419 residues: L-rhamnose isomerase (419 aa).

Mn(2+) is bound by residues His262, Asp294, and Asp296.

It belongs to the rhamnose isomerase family. In terms of assembly, homotetramer. Requires Mn(2+) as cofactor.

Its subcellular location is the cytoplasm. The enzyme catalyses L-rhamnopyranose = L-rhamnulose. It functions in the pathway carbohydrate degradation; L-rhamnose degradation; glycerone phosphate from L-rhamnose: step 1/3. Its function is as follows. Catalyzes the interconversion of L-rhamnose and L-rhamnulose. This is L-rhamnose isomerase from Escherichia coli O127:H6 (strain E2348/69 / EPEC).